The following is a 610-amino-acid chain: tRNA uridine 5-carboxymethylaminomethyl modification enzyme MnmG (610 aa).

Position 14–19 (14–19 (GAGHAG)) interacts with FAD. 274-288 (GPRYCPSIEDKIVKF) is an NAD(+) binding site.

This sequence belongs to the MnmG family. As to quaternary structure, homodimer. Heterotetramer of two MnmE and two MnmG subunits. Requires FAD as cofactor.

The protein resides in the cytoplasm. In terms of biological role, NAD-binding protein involved in the addition of a carboxymethylaminomethyl (cmnm) group at the wobble position (U34) of certain tRNAs, forming tRNA-cmnm(5)s(2)U34. This is tRNA uridine 5-carboxymethylaminomethyl modification enzyme MnmG from Chlamydia trachomatis serovar L2b (strain UCH-1/proctitis).